The primary structure comprises 1159 residues: ATP-dependent helicase/deoxyribonuclease subunit B (1159 aa).

This sequence belongs to the helicase family. AddB/RexB type 2 subfamily. In terms of assembly, heterodimer of AddA and RexB. Mg(2+) serves as cofactor.

Its function is as follows. The heterodimer acts as both an ATP-dependent DNA helicase and an ATP-dependent, dual-direction single-stranded exonuclease. Recognizes the chi site generating a DNA molecule suitable for the initiation of homologous recombination. This subunit has 5' -&gt; 3' nuclease activity but not helicase activity. This is ATP-dependent helicase/deoxyribonuclease subunit B from Leuconostoc mesenteroides subsp. mesenteroides (strain ATCC 8293 / DSM 20343 / BCRC 11652 / CCM 1803 / JCM 6124 / NCDO 523 / NBRC 100496 / NCIMB 8023 / NCTC 12954 / NRRL B-1118 / 37Y).